The chain runs to 276 residues: Release factor glutamine methyltransferase (276 aa).

Residues 116–120 (GTGTG), aspartate 139, tryptophan 167, and asparagine 182 contribute to the S-adenosyl-L-methionine site. Residue 182 to 185 (NPPY) coordinates substrate.

It belongs to the protein N5-glutamine methyltransferase family. PrmC subfamily.

It carries out the reaction L-glutaminyl-[peptide chain release factor] + S-adenosyl-L-methionine = N(5)-methyl-L-glutaminyl-[peptide chain release factor] + S-adenosyl-L-homocysteine + H(+). Functionally, methylates the class 1 translation termination release factors RF1/PrfA and RF2/PrfB on the glutamine residue of the universally conserved GGQ motif. This is Release factor glutamine methyltransferase from Pseudomonas aeruginosa (strain ATCC 15692 / DSM 22644 / CIP 104116 / JCM 14847 / LMG 12228 / 1C / PRS 101 / PAO1).